The sequence spans 702 residues: Polyribonucleotide nucleotidyltransferase (702 aa).

Positions 493 and 499 each coordinate Mg(2+). The 61-residue stretch at Pro-559–Ile-619 folds into the KH domain. Residues Gly-643 to Ala-702 form the S1 motif domain.

It belongs to the polyribonucleotide nucleotidyltransferase family. It depends on Mg(2+) as a cofactor.

The protein resides in the cytoplasm. The enzyme catalyses RNA(n+1) + phosphate = RNA(n) + a ribonucleoside 5'-diphosphate. Its function is as follows. Involved in mRNA degradation. Catalyzes the phosphorolysis of single-stranded polyribonucleotides processively in the 3'- to 5'-direction. This Campylobacter lari (strain RM2100 / D67 / ATCC BAA-1060) protein is Polyribonucleotide nucleotidyltransferase.